The chain runs to 350 residues: Solute carrier family 35 member E4 (350 aa).

8 helical membrane-spanning segments follow: residues 40–60, 79–99, 110–130, 135–155, 218–238, 258–278, 279–299, and 301–321; these read VLGQPALARVVVAALVWLLAG, PLLLSALHMLAAAVACHWGAQ, VLLLSLTFGTSMACGNVGLST, LAQLATTTTPLFTLALSALLL, VTLLYATSLPSFCLLAGAALV, VLLSCFLSVVYNLASFSLLAL, TSALTVHVLGNLTVVGNLILS, and LLFGSHLSALSYVGIALTLSG. The 55-residue stretch at 125–179 folds into the EamA domain; that stretch reads NVGLSTVPLDLAQLATTTTPLFTLALSALLLGRRHHPLQFAAMGPLCLGAACSLA.

This sequence belongs to the TPT transporter family. SLC35E subfamily.

The protein localises to the membrane. Functionally, putative transporter. This Rattus norvegicus (Rat) protein is Solute carrier family 35 member E4 (Slc35e4).